Reading from the N-terminus, the 220-residue chain is Catechol O-methyltransferase (220 aa).

S-adenosyl-L-methionine contacts are provided by residues Val-44, Glu-66, 68 to 69 (GT), Ser-74, Glu-92, and Ala-121. An a divalent metal cation-binding site is contributed by Asp-139. Residue Asp-141 coordinates S-adenosyl-L-methionine. The a divalent metal cation site is built by Asp-165 and Asn-166.

This sequence belongs to the class I-like SAM-binding methyltransferase superfamily. Cation-dependent O-methyltransferase family. Homodimer. A divalent metal cation is required as a cofactor.

It catalyses the reaction a catechol + S-adenosyl-L-methionine = a guaiacol + S-adenosyl-L-homocysteine + H(+). Its activity is regulated as follows. Inhibited by EDTA. In terms of biological role, catechol O-methyltransferase that can use various catechol-like compounds such as gallic acid (GA), 3,4-dihydroxy-5-methoxy-benzoic acid (5OMeBA), protocatechuic acid (PCA), 3,4-dihydroxy-benzaldehyde (DHA), dopamine, caffeic acid (CA), luteolin, quercetin, and 5-hydroxyuridine. This chain is Catechol O-methyltransferase, found in Mycobacterium tuberculosis (strain ATCC 25618 / H37Rv).